The primary structure comprises 470 residues: Glutamate--tRNA ligase 2 (470 aa).

Residues 11-21 carry the 'HIGH' region motif; it reads PSPTGHLHLGG. The 'KMSKS' region signature appears at 238-242; that stretch reads KLSKR. Lysine 241 provides a ligand contact to ATP.

It belongs to the class-I aminoacyl-tRNA synthetase family. Glutamate--tRNA ligase type 1 subfamily. Monomer.

It localises to the cytoplasm. It catalyses the reaction tRNA(Glu) + L-glutamate + ATP = L-glutamyl-tRNA(Glu) + AMP + diphosphate. Functionally, catalyzes the attachment of glutamate to tRNA(Glu) in a two-step reaction: glutamate is first activated by ATP to form Glu-AMP and then transferred to the acceptor end of tRNA(Glu). The sequence is that of Glutamate--tRNA ligase 2 from Ehrlichia ruminantium (strain Welgevonden).